Reading from the N-terminus, the 90-residue chain is MTRWWRSRYICRSQCSNVKNSTCSQQILYIHLLILSYTTITKSFFKTLNHHQKSMFKVIRLKYIFEINSCISHPSILDLYVLKNTILLIL.

This Homo sapiens (Human) protein is Protein A54.